A 249-amino-acid polypeptide reads, in one-letter code: uncharacterized protein (249 aa).

One can recognise an S4 RNA-binding domain in the interval 4–71; that stretch reads VRINKFLSEA…RKRYIILNKP (68 aa). Asp106 serves as the catalytic Nucleophile.

Belongs to the pseudouridine synthase RsuA family.

It catalyses the reaction a uridine in RNA = a pseudouridine in RNA. This is an uncharacterized protein from Aquifex aeolicus (strain VF5).